We begin with the raw amino-acid sequence, 151 residues long: Probable cGMP 3',5'-cyclic phosphodiesterase subunit delta (151 aa).

The protein belongs to the PDE6D/unc-119 family. Interacts with Pde6.

It localises to the nucleus. The protein resides in the cytoplasm. The polypeptide is Probable cGMP 3',5'-cyclic phosphodiesterase subunit delta (Drosophila grimshawi (Hawaiian fruit fly)).